We begin with the raw amino-acid sequence, 464 residues long: Aspartyl protease 37 (464 aa).

The N-terminal stretch at 1-19 (MNAAVLLLLLALAALPASC) is a signal peptide. Asn-41 carries N-linked (GlcNAc...) asparagine glycosylation. The Peptidase A1 domain occupies 89–456 (YLVKLGIGTP…NLRRGRVTFV (368 aa)). Asp-107 is an active-site residue. Cys-117 and Cys-123 are disulfide-bonded. Asn-174 and Asn-261 each carry an N-linked (GlcNAc...) asparagine glycan. Residues 299–311 (TTTTTATATATAP) show a composition bias toward low complexity. Residues 299–319 (TTTTTATATATAPAPAPTPSP) form a disordered region. N-linked (GlcNAc...) asparagine glycosylation occurs at Asn-320. Asp-337 is an active-site residue. Cys-376 and Cys-420 are disulfide-bonded.

This sequence belongs to the peptidase A1 family.

Anther-specific aspartic protease involved in tapetal programmed cell death (PCD). Directly regulated by the transcription factor EAT1/DTD in anthers during tapetum PCD and degeneration. The sequence is that of Aspartyl protease 37 from Oryza sativa subsp. japonica (Rice).